Here is a 775-residue protein sequence, read N- to C-terminus: Coiled-coil domain-containing protein R3HCC1L (775 aa).

Basic and acidic residues-rich tracts occupy residues 1-16 (MQQEAERCRVRTKRPD) and 65-112 (ESQR…KGAE). Disordered regions lie at residues 1–127 (MQQE…HRAP) and 235–262 (LSSDSETAPSSLETPDGMSKHSPGDISV). An EJC-binding motif; may mediate interaction with the EJC region spans residues 7–27 (RCRVRTKRPDMALYVPKARRG). A compositionally biased stretch (polar residues) spans 235–247 (LSSDSETAPSSLE). The residue at position 671 (S671) is a Phosphoserine. At T695 the chain carries Phosphothreonine. Positions 734–766 (RSKQSKTEREAELRKLQEARERKRLEAKQREDI) form a coiled coil. The interval 755-775 (RKRLEAKQREDIWEGRDQSVV) is disordered.

May interact with the exon junction complex (EJC) composed at least of CASC3, EIF4A3, MAGOH and RBM8A.

The chain is Coiled-coil domain-containing protein R3HCC1L (R3hcc1l) from Mus musculus (Mouse).